The chain runs to 150 residues: Ribonuclease P protein subunit p21 (150 aa).

At Ala2 the chain carries N-acetylalanine. Residues Cys62, Cys65, Cys92, and Cys95 each coordinate Zn(2+). Residues 121–150 are disordered; it reads QADINPSEPLPNIADLPKENIQTQALNTSE. The segment covering 140–150 has biased composition (polar residues); sequence NIQTQALNTSE.

It belongs to the eukaryotic/archaeal RNase P protein component 4 family. As to quaternary structure, RNase P consists of a catalytic RNA moiety and about 10 protein subunits; POP1, POP4, POP5, POP7, RPP14, RPP21, RPP25, RPP30, RPP38 and RPP40. Within the RNase P complex, POP1, POP7 and RPP25 form the 'finger' subcomplex, POP5, RPP14, RPP40 and homodimeric RPP30 form the 'palm' subcomplex, and RPP21, POP4 and RPP38 form the 'wrist' subcomplex. All subunits of the RNase P complex interact with the catalytic RNA.

The protein resides in the nucleus. It is found in the nucleolus. Component of ribonuclease P, a ribonucleoprotein complex that generates mature tRNA molecules by cleaving their 5'-ends. The sequence is that of Ribonuclease P protein subunit p21 (Rpp21) from Mus musculus (Mouse).